The primary structure comprises 473 residues: Sarcalumenin (473 aa).

The signal sequence occupies residues 1-20 (MRALVLLGCLLASLLFSGQA). Residues 90 to 331 (ITSKPMVLFL…IENRLENKIA (242 aa)) form the Dynamin-type G domain. Positions 100–107 (GPWSVGKS) are G1 motif. Residues 128-129 (EP) form a G2 motif region. Residues 190-193 (DTPG) form a G3 motif region. The G4 motif stretch occupies residues 255–258 (NKAD). Residue proline 278 is a region of interest, G5 motif. Residues asparagine 281 and asparagine 389 are each glycosylated (N-linked (GlcNAc...) asparagine).

The protein belongs to the TRAFAC class dynamin-like GTPase superfamily. Dynamin/Fzo/YdjA family. In terms of processing, N-glycosylated.

Its subcellular location is the sarcoplasmic reticulum lumen. It localises to the sarcoplasmic reticulum membrane. This chain is Sarcalumenin (SRL), found in Homo sapiens (Human).